The following is a 189-amino-acid chain: Elongation factor P (189 aa).

K34 carries the N6-(3,6-diaminohexanoyl)-5-hydroxylysine modification.

This sequence belongs to the elongation factor P family. May be beta-lysylated on the epsilon-amino group of Lys-34 by the combined action of EpmA and EpmB, and then hydroxylated on the C5 position of the same residue by EpmC (if this protein is present). Lysylation is critical for the stimulatory effect of EF-P on peptide-bond formation. The lysylation moiety may extend toward the peptidyltransferase center and stabilize the terminal 3-CCA end of the tRNA. Hydroxylation of the C5 position on Lys-34 may allow additional potential stabilizing hydrogen-bond interactions with the P-tRNA.

The protein localises to the cytoplasm. It participates in protein biosynthesis; polypeptide chain elongation. Functionally, involved in peptide bond synthesis. Alleviates ribosome stalling that occurs when 3 or more consecutive Pro residues or the sequence PPG is present in a protein, possibly by augmenting the peptidyl transferase activity of the ribosome. Modification of Lys-34 is required for alleviation. This is Elongation factor P from Alkalilimnicola ehrlichii (strain ATCC BAA-1101 / DSM 17681 / MLHE-1).